A 538-amino-acid polypeptide reads, in one-letter code: MFS-type transporter tndD (538 aa).

The interval 1–42 (MSLSGSDSHLAVSPTLAEDMNSSDTSAGLAETPPADEEKRSI) is disordered. N21 and N71 each carry an N-linked (GlcNAc...) asparagine glycan. 11 consecutive transmembrane segments (helical) span residues 81–101 (VGIV…FAPG), 115–135 (LLAG…PLIL), 153–173 (ICFT…MLIA), 203–223 (GGVI…GPVA), 235–255 (WVFW…FLFL), 309–329 (PIVA…YLMF), 348–368 (GLTF…IGAV), 394–414 (LPPL…YGWS), 422–442 (IVPI…FMCI), 444–464 (SYLV…NTVV), and 485–505 (LGWG…IPWA).

Belongs to the major facilitator superfamily.

The protein resides in the membrane. In terms of biological role, MFS-type transporter; part of the gene cluster that mediates the biosynthesis of talaronoid C, a fusicoccane diterpenoid with an unprecedented tricyclic 5/8/6 ring system. The protein is MFS-type transporter tndD of Aspergillus flavipes.